The chain runs to 347 residues: S-adenosylmethionine:tRNA ribosyltransferase-isomerase (347 aa).

It belongs to the QueA family. Monomer.

The protein resides in the cytoplasm. It catalyses the reaction 7-aminomethyl-7-carbaguanosine(34) in tRNA + S-adenosyl-L-methionine = epoxyqueuosine(34) in tRNA + adenine + L-methionine + 2 H(+). Its pathway is tRNA modification; tRNA-queuosine biosynthesis. Its function is as follows. Transfers and isomerizes the ribose moiety from AdoMet to the 7-aminomethyl group of 7-deazaguanine (preQ1-tRNA) to give epoxyqueuosine (oQ-tRNA). The protein is S-adenosylmethionine:tRNA ribosyltransferase-isomerase of Exiguobacterium sibiricum (strain DSM 17290 / CCUG 55495 / CIP 109462 / JCM 13490 / 255-15).